Consider the following 35-residue polypeptide: Jingzhaotoxin F5-21.66 (35 aa).

3 disulfide bridges follow: Cys2–Cys16, Cys9–Cys21, and Cys15–Cys29.

Belongs to the neurotoxin 10 (Hwtx-1) family. 48 (Jztx-F5) subfamily. In terms of tissue distribution, expressed by the venom gland.

Its subcellular location is the secreted. In terms of biological role, probable ion channel inhibitor. The chain is Jingzhaotoxin F5-21.66 from Chilobrachys guangxiensis (Chinese earth tiger tarantula).